The sequence spans 1365 residues: Zinc finger protein 423 (1365 aa).

Positions Met1–Ser11 are enriched in basic residues. Residues Met1–Asp69 are disordered. Residues Val37–Gly51 show a composition bias toward basic and acidic residues. The C2H2-type 1 zinc finger occupies Phe76–His98. Residues Cys99–Gln126 form a disordered region. A compositionally biased stretch (low complexity) spans Val112–Gln126. C2H2-type zinc fingers lie at residues Tyr150 to His172, Phe178 to His200, Tyr206 to His228, and Phe234 to His256. The interval Gln250–Glu280 is disordered. Basic and acidic residues predominate over residues Glu261 to Ser274. 3 C2H2-type zinc fingers span residues Tyr286–His309, Leu318–His341, and His346–His368. Residues Asp366–Gly429 form a disordered region. A compositionally biased stretch (low complexity) spans Ser386–Ser400. The C2H2-type 9; degenerate zinc finger occupies Tyr437–His461. 3 C2H2-type zinc fingers span residues His469–His492, Phe513–His536, and Phe555–His578. A C2H2-type 13; atypical zinc finger spans residues Tyr603–His628. C2H2-type zinc fingers lie at residues Tyr675 to His697, Gln705 to His728, Tyr736 to His759, Tyr764 to His787, Tyr794 to His817, Arg831 to His853, and Tyr857 to His880. The segment covering Gly885–Gln895 has biased composition (gly residues). The interval Gly885–Ala916 is disordered. Over residues Val902 to Ser913 the composition is skewed to polar residues. The C2H2-type 21; degenerate zinc finger occupies Tyr954–Asp976. C2H2-type zinc fingers lie at residues His1000–His1022, Tyr1029–His1051, Phe1090–His1112, Leu1201–His1224, Tyr1249–His1271, His1279–His1301, Phe1310–His1333, and Tyr1340–His1363.

The protein belongs to the krueppel C2H2-type zinc-finger protein family.

It localises to the nucleus. Functionally, transcription factor that can both act as an activator or a repressor depending on the context. Plays a central role in BMP signaling and olfactory neurogenesis. Associates with SMADs in response to bmp2 leading to activate transcription of BMP target genes. Acts as a transcriptional repressor involved in terminal olfactory receptor neurons differentiation. Involved in olfactory neurogenesis by participating in a developmental switch that regulates the transition from differentiation to maturation in olfactory receptor neurons. The polypeptide is Zinc finger protein 423 (znf423) (Danio rerio (Zebrafish)).